The sequence spans 574 residues: 3-hydroxy-3-methylglutaryl-coenzyme A reductase 3 (574 aa).

A disordered region spans residues 1 to 30 (MDVRRRPVKPLYPSEHISSGEPLKPHNQDS). Residues 41 to 61 (PLYLTNGLFFTMFFSVMYFLL) form a helical membrane-spanning segment. An N-linked (GlcNAc...) asparagine glycan is attached at Asn78. Residues 83-103 (VAMVSLIASVIYLLGFFGIGF) traverse the membrane as a helical segment. Residues 104–161 (VQSFVSKGNNDSWDVEDESPEQFIDRTVTPPPVRRNIPMKSVPVAEKTAQIITPFSSE) are linker. N-linked (GlcNAc...) asparagine glycosylation occurs at Asn113. The tract at residues 162-574 (DDEVVIKSVV…YNRSCKDVTK (413 aa)) is catalytic. Glu256 serves as the catalytic Charge relay system. A glycan (N-linked (GlcNAc...) asparagine) is linked at Asn320. Residue Lys388 is the Charge relay system of the active site. Asn433 carries an N-linked (GlcNAc...) asparagine glycan. Asp464 acts as the Charge relay system in catalysis. The Proton donor role is filled by His562. Asn566 carries an N-linked (GlcNAc...) asparagine glycan.

It belongs to the HMG-CoA reductase family. As to expression, expressed in mature petals and anthers.

Its subcellular location is the endoplasmic reticulum membrane. It carries out the reaction (R)-mevalonate + 2 NADP(+) + CoA = (3S)-3-hydroxy-3-methylglutaryl-CoA + 2 NADPH + 2 H(+). It participates in metabolic intermediate biosynthesis; (R)-mevalonate biosynthesis; (R)-mevalonate from acetyl-CoA: step 3/3. Its function is as follows. Catalyzes the synthesis of mevalonate. The specific precursor of all isoprenoid compounds present in plants. The sequence is that of 3-hydroxy-3-methylglutaryl-coenzyme A reductase 3 (HMG3) from Solanum tuberosum (Potato).